Consider the following 417-residue polypeptide: Sulfate adenylyltransferase (417 aa).

It belongs to the sulfate adenylyltransferase family.

It carries out the reaction sulfate + ATP + H(+) = adenosine 5'-phosphosulfate + diphosphate. It functions in the pathway sulfur metabolism; hydrogen sulfide biosynthesis; sulfite from sulfate: step 1/3. This is Sulfate adenylyltransferase from Psychrobacter cryohalolentis (strain ATCC BAA-1226 / DSM 17306 / VKM B-2378 / K5).